The sequence spans 1470 residues: MGDAADPREVRRTFIVPAIKPFDHYDFSRAKIACNLAWLVAKAFGTETVPEELREPFYTDQYDQEHIKPPVVNLLLSAELYCRAGSLILKSDAAKPLLGHDAVIQALAHKGLYVTDQEKLVTERDLHKKPIQMSAHLAMIDTLMMAYTVEMVSIEKVIACAQQYSAFFQATDLPYDIEDAVMYWINKVNEHLKDIMEQEQKSKEHHTAEAPGGQKSPSKWFWKLVPARYRKEQTLLKQLPCIPLVENLLKDGTDGCALAALIHFYCPAVVRLEDICLKETMSLADSLYNLQLIQEFCQEYLNHCCHFSLEDMLYAASSIKSNYLVFMAELFWWFEVVKPSFVQPRVVRPQGAEPAKDMPSVPVLNAAKRNVLDSSSSSDFTSRYTRPQTHSSVSGGIRRSSSMSYVDGFIGTWPKEKRTSVHGVSFDISFDKEDNAQSSTPNRGIIRSVSNEGLNNSRASKHIRKNLSFKPVNGGEEESIEEELHVDPHGDLKSYMPLSTNELNSNENTHHKLPNGALQNRVLLDEFGNQIETPSIEEALQIIHDTEKPPHTARPDQIANGFFLHGQDLSLLNSNIKLSQSSPDNITDPKGALSPITDTTEVDTGIHVPSEDIPETMDEDSSLRDYTVSLDSDMDDASKFLQDYDIRASNPREALSPCPSTISTKSQPGSSASSSSGVKMTSFAEQKFRKLNHTDGKSSGSSSQKTTPEGSELNIPHMVSWAQIPEESGVAQGRDTTQLLASEMVHLRMRLEEKRRAIEAQKKKMEAAFTKQRQKMGRTAFLTVVKKKGDGISPLREEAAGAEDEKVYTDRAKEKESQKMDGQRSKSLADIKESMENPQGKWLKSPSTPVDPEKQWNLTSPSEETLNEGELLEYTKSIEKLNSSLHFLQQEMQRLSLQQEMLMQMREQQSWVISPPQPSPQKQIRDFKPRQAGLSSAAAPFSADSPRPTHPSPQSSTRKSASFSVKNQRTPRPNELKITPLNRTLTPPRSVDSLPRLRRFSPSQVPIQTRSFVCFGDDGEPQKEPKPKEEIKKEPSECKGTLESCDHNPGEKEVKPLESTVSEVLSQPITETVCVTPNEDQLNQPTDPPPKPVFPPTAPKNVNLIEVSLSDLKPPEKADVSVEKFDGESDKEQFDDDQKVCCGFFFKDDQKAENDMAVKRAALLEKRLRREKETQLRKQQLEAEMEHRKEETRRKTEEERQKKEDERARREFIRQEYMRRKQLKLMEDMDTVIKPRPQVAKQKKQRPKSIHRDHIESPKTPIKGPPVSSLSLASLNTGDTESVHSGKRTPRSESVEGFLSPSRCGSRNGEKDWENASTTSSVASGTEYTGPKLYKEPSAKSNKHIIQNALAHCCLAGKVNEGQKKKILEEMEKSDANNFLILFRDSGCQFRSLYTYCPETEEINKLTGIGPKSITKKMIEGLYKYNSDRKQFSHIPAKTLSASVDAITIHSHLWQTKRPVTPKKLLPTKA.

The region spanning 222–335 (WKLVPARYRK…FMAELFWWFE (114 aa)) is the Calponin-homology (CH) domain. Positions 374–397 (SSSSSDFTSRYTRPQTHSSVSGGI) are disordered. The span at 380-390 (FTSRYTRPQTH) shows a compositional bias: polar residues. Phosphoserine occurs at positions 402 and 404. Residue threonine 412 is modified to Phosphothreonine. Phosphoserine occurs at positions 450, 581, 582, 594, and 656. 2 disordered regions span residues 580 to 622 (QSSP…EDSS) and 648 to 712 (ASNP…EGSE). Threonine 661 is subject to Phosphothreonine. At serine 663 the chain carries Phosphoserine. Residues 663–682 (STKSQPGSSASSSSGVKMTS) show a composition bias toward low complexity. The span at 686–696 (QKFRKLNHTDG) shows a compositional bias: basic and acidic residues. Positions 739-776 (LLASEMVHLRMRLEEKRRAIEAQKKKMEAAFTKQRQKM) form a coiled coil. The span at 796 to 835 (REEAAGAEDEKVYTDRAKEKESQKMDGQRSKSLADIKESM) shows a compositional bias: basic and acidic residues. The tract at residues 796–864 (REEAAGAEDE…QWNLTSPSEE (69 aa)) is disordered. At serine 845 the chain carries Phosphoserine. A coiled-coil region spans residues 870-909 (ELLEYTKSIEKLNSSLHFLQQEMQRLSLQQEMLMQMREQQ). Residues 905-1016 (MREQQSWVIS…IQTRSFVCFG (112 aa)) are MBD region. 2 positions are modified to phosphoserine: serine 914 and serine 919. Disordered stretches follow at residues 930–1059 (RQAG…PLES) and 1078–1099 (NEDQLNQPTDPPPKPVFPPTAP). A compositionally biased stretch (low complexity) spans 935 to 946 (SSAAAPFSADSP). Residues 952–971 (SPQSSTRKSASFSVKNQRTP) are compositionally biased toward polar residues. Phosphothreonine occurs at positions 979, 984, and 986. A phosphoserine mark is found at serine 990 and serine 1001. Residues 1001–1011 (SPSQVPIQTRS) are compositionally biased toward polar residues. Composition is skewed to basic and acidic residues over residues 1020–1037 (EPQKEPKPKEEIKKEPSE) and 1044–1056 (SCDHNPGEKEVKP). The segment covering 1086-1098 (TDPPPKPVFPPTA) has biased composition (pro residues). Position 1129 is a phosphoserine (serine 1129). Residues 1147–1219 (KDDQKAENDM…REFIRQEYMR (73 aa)) adopt a coiled-coil conformation. A compositionally biased stretch (basic and acidic residues) spans 1167-1233 (RLRREKETQL…KLMEDMDTVI (67 aa)). Residues 1167–1327 (RLRREKETQL…TTSSVASGTE (161 aa)) form a disordered region. Positions 1268–1280 (SSLSLASLNTGDT) are enriched in polar residues. 3 positions are modified to phosphoserine: serine 1294, serine 1300, and serine 1302. Residues 1315–1327 (NASTTSSVASGTE) are compositionally biased toward polar residues. One can recognise a CKK domain in the interval 1330–1464 (GPKLYKEPSA…QTKRPVTPKK (135 aa)).

The protein belongs to the CAMSAP1 family. As to quaternary structure, interacts with CAMSAP3. Interacts with KATNA1 and KATNB1; leading to regulate the length of CAMSAP2-decorated microtubule stretches. Interacts with a complex formed by AKAP9 and PDE4DIP; this interaction, which is PDE4DIP isoform-specific, recruits CAMSAP2 to the Golgi. Interacts with MAPRE1/EB1. Present in the soma, axon, and dendritic shaft of hippocampal neurons (at protein level).

It localises to the cytoplasm. It is found in the cytoskeleton. The protein resides in the golgi apparatus. The protein localises to the cilium basal body. In terms of biological role, key microtubule-organizing protein that specifically binds the minus-end of non-centrosomal microtubules and regulates their dynamics and organization. Specifically recognizes growing microtubule minus-ends and autonomously decorates and stabilizes microtubule lattice formed by microtubule minus-end polymerization. Acts on free microtubule minus-ends that are not capped by microtubule-nucleating proteins or other factors and protects microtubule minus-ends from depolymerization. In addition, it also reduces the velocity of microtubule polymerization. Through the microtubule cytoskeleton, also regulates the organization of cellular organelles including the Golgi and the early endosomes. Essential for the tethering, but not for nucleation of non-centrosomal microtubules at the Golgi: together with Golgi-associated proteins AKAP9 and PDE4DIP, required to tether non-centrosomal minus-end microtubules to the Golgi, an important step for polarized cell movement. Also acts as a regulator of neuronal polarity and development: localizes to non-centrosomal microtubule minus-ends in neurons and stabilizes non-centrosomal microtubules, which is required for neuronal polarity, axon specification and dendritic branch formation. Through the microtubule cytoskeleton, regulates the autophagosome transport. The protein is Calmodulin-regulated spectrin-associated protein 2 of Rattus norvegicus (Rat).